Consider the following 287-residue polypeptide: UPF0354 protein SSP1020 (287 aa).

Belongs to the UPF0354 family.

The polypeptide is UPF0354 protein SSP1020 (Staphylococcus saprophyticus subsp. saprophyticus (strain ATCC 15305 / DSM 20229 / NCIMB 8711 / NCTC 7292 / S-41)).